The following is a 283-amino-acid chain: Elongation factor Ts (283 aa).

Positions 82–85 (TDFV) are involved in Mg(2+) ion dislocation from EF-Tu.

It belongs to the EF-Ts family.

Its subcellular location is the cytoplasm. Its function is as follows. Associates with the EF-Tu.GDP complex and induces the exchange of GDP to GTP. It remains bound to the aminoacyl-tRNA.EF-Tu.GTP complex up to the GTP hydrolysis stage on the ribosome. This is Elongation factor Ts from Photorhabdus laumondii subsp. laumondii (strain DSM 15139 / CIP 105565 / TT01) (Photorhabdus luminescens subsp. laumondii).